Consider the following 441-residue polypeptide: N-acetyl-S-(2-succino)cysteine monooxygenase (441 aa).

Residues D59, T96, H146, Y150, S220, and S221 each contribute to the FMN site.

Belongs to the NtaA/SnaA/DszA monooxygenase family. In terms of assembly, homodimer. FMN is required as a cofactor.

It catalyses the reaction N-acetyl-S-(2-succino)-L-cysteine + NADH + O2 + H(+) = N-acetyl-L-cysteine + oxaloacetate + NAD(+) + H2O. Its pathway is amino-acid biosynthesis; L-cysteine biosynthesis. Catalyzes the oxidative cleavage of the C-S bond of N-acetyl-S-(2-succino)cysteine, forming oxaloacetate and N-acetylcysteine (NAC). Is involved in a S-(2-succino)cysteine (2SC) degradation pathway that allows B.subtilis to grow on 2SC as a sole sulfur source, via its metabolization to cysteine. Shows almost no activity on S-succinylglutathione and 2SC. In Bacillus subtilis (strain 168), this protein is N-acetyl-S-(2-succino)cysteine monooxygenase.